The chain runs to 96 residues: Protein Vpr (96 aa).

The tract at residues 1–42 is homooligomerization; sequence MEQAPEDQGPQREPHNEWTLELLEELKNEAVRHFPRIWLHGL. Phosphoserine; by host occurs at positions 79, 94, and 96.

It belongs to the HIV-1 VPR protein family. As to quaternary structure, homooligomer, may form homodimer. Interacts with p6-gag region of the Pr55 Gag precursor protein through a (Leu-X-X)4 motif near the C-terminus of the P6gag protein. Interacts with host UNG. May interact with host RAD23A/HHR23A. Interacts with host VPRBP/DCAF1, leading to hijack the CUL4A-RBX1-DDB1-DCAF1/VPRBP complex, mediating ubiquitination of host proteins such as TERT and ZGPAT and arrest of the cell cycle in G2 phase. In terms of processing, phosphorylated on several residues by host. These phosphorylations regulate VPR activity for the nuclear import of the HIV-1 pre-integration complex.

The protein resides in the virion. The protein localises to the host nucleus. Its subcellular location is the host extracellular space. In terms of biological role, during virus entry, plays a role in the transport of the viral pre-integration (PIC) complex to the host nucleus. This function is crucial for viral infection of non-dividing macrophages. May act directly at the nuclear pore complex, by binding nucleoporins phenylalanine-glycine (FG)-repeat regions. During virus replication, may deplete host UNG protein, and incude G2-M cell cycle arrest. Acts by targeting specific host proteins for degradation by the 26S proteasome, through association with the cellular CUL4A-DDB1 E3 ligase complex by direct interaction with host VPRPB/DCAF-1. Cell cycle arrest reportedly occurs within hours of infection and is not blocked by antiviral agents, suggesting that it is initiated by the VPR carried into the virion. Additionally, VPR induces apoptosis in a cell cycle dependent manner suggesting that these two effects are mechanistically linked. Detected in the serum and cerebrospinal fluid of AIDS patient, VPR may also induce cell death to bystander cells. In Homo sapiens (Human), this protein is Protein Vpr.